Consider the following 364-residue polypeptide: Carbamoyl phosphate synthase pyrimidine-specific small chain (364 aa).

The CPSase stretch occupies residues M1–N169. 3 residues coordinate L-glutamine: S45, G217, and G219. The Glutamine amidotransferase type-1 domain maps to N169 to T356. The active-site Nucleophile is the C244. 5 residues coordinate L-glutamine: L245, Q248, N286, G288, and Y289. Active-site residues include H329 and D331.

Belongs to the CarA family. As to quaternary structure, composed of two chains; the small (or glutamine) chain promotes the hydrolysis of glutamine to ammonia, which is used by the large (or ammonia) chain to synthesize carbamoyl phosphate. Tetramer of heterodimers (alpha,beta)4.

The enzyme catalyses hydrogencarbonate + L-glutamine + 2 ATP + H2O = carbamoyl phosphate + L-glutamate + 2 ADP + phosphate + 2 H(+). The catalysed reaction is L-glutamine + H2O = L-glutamate + NH4(+). The protein operates within pyrimidine metabolism; UMP biosynthesis via de novo pathway; (S)-dihydroorotate from bicarbonate: step 1/3. Inhibited by pyrimidine. In terms of biological role, small subunit of the glutamine-dependent carbamoyl phosphate synthetase (CPSase). CPSase catalyzes the formation of carbamoyl phosphate from the ammonia moiety of glutamine, carbonate, and phosphate donated by ATP, constituting the first step of the biosynthetic pathway leading to pyrimidine nucleotides. The small subunit (glutamine amidotransferase) binds and cleaves glutamine to supply the large subunit with the substrate ammonia. The protein is Carbamoyl phosphate synthase pyrimidine-specific small chain of Lactiplantibacillus plantarum (strain ATCC BAA-793 / NCIMB 8826 / WCFS1) (Lactobacillus plantarum).